A 135-amino-acid chain; its full sequence is Transcriptional activator protein (135 aa).

The short motif at 17-32 is the Nuclear localization signal element; it reads KIQHHIAKKRQVRRRR. The segment at 37–54 is a zinc-finger region; that stretch reads CGCSYYIHLDCINHGFTH. A transactivation region spans residues 120–135; the sequence is HLDDLTVSDWSFFKSL.

Belongs to the geminiviridae transcriptional activator protein family. In terms of assembly, monomer. Homodimer. Homooligomer. Self-interaction correlates with nuclear localization and efficient activation of transcription. Monomers suppress local silencing by interacting with and inactivating host adenosine kinase 2 (ADK2) in the cytoplasm. Interacts with and inhibits host SNF1 kinase. Binds to ssDNA. In terms of processing, phosphorylated.

The protein localises to the host nucleus. It localises to the host cytoplasm. Strong activator of the late viral genes promoters. Acts as a suppressor of RNA-mediated gene silencing, also known as post-transcriptional gene silencing (PTGS), a mechanism of plant viral defense that limits the accumulation of viral RNAs. TrAP suppresses the host RNA silencing by inhibiting adenosine kinase 2 (ADK2), a kinase involved in a general methylation pathway. Also suppresses the host basal defense by interacting with and inhibiting SNF1 kinase, a key regulator of cell metabolism implicated in innate antiviral defense. Determines pathogenicity. This Tomato yellow leaf curl Sardinia virus (isolate Spain-2) (TYLCSV) protein is Transcriptional activator protein.